A 644-amino-acid polypeptide reads, in one-letter code: MFQDNPLLAQLKQQLHTQTPRVEGVVKGTEKGFGFLEVDGQKSYFIPPPQMKKVMHGDRIIATLHTDKDREIAEPETLVEPFLSRFVGRVQRKDDRLSIVPDHPLLRDAIQCRPVRELTHSFQNGDWAVAEMCRHPLKGDRAFQADLTAFITNGEDHFVPWWVTLARHNLEREAPAMVESALNDAELEREDLTALNFVTIDSASTEDMDDALFVQDNGDGSWLLTIAIADPTAYVVENSELDLTARKRAFTNYLPGFNIPMLPRDLSDNLCSLRPNERRPVLVCRVTITEEGTLSNDIRFSAAWVESKAKLVYDDVSDWLEGNNRWQPQDTAIAEQITLLKRICDARSNWRQQHALVFKDRPDYRFLLGEKGEVLDIIVEHRRIANRIVEECMIAANVCAALALREHLGFGIYNVHTGFDPALVEQAASVLKANGVGADPQALLTLPGFCELRRHLDALPTQFLDSRIRRFQTFAEISTVPGPHFGLGLEAYATWTSPIRKYGDMVNHRLLKAIITGQQAEKPQEEITVQLAERRRLNRMAERDVGDWLYARYLQPQAGTDTRFTAEIIDITRGGLRVRLLDNGAVAFIPAPFIHAVRDEVVCSQETGTVQIKGETVYSQSDKIEVRIAEVRMETRNVIARPVA.

Positions 189–516 constitute an RNB domain; that stretch reads REDLTALNFV…NHRLLKAIIT (328 aa). The 83-residue stretch at 561-643 folds into the S1 motif domain; that stretch reads DTRFTAEIID…ETRNVIARPV (83 aa).

This sequence belongs to the RNR ribonuclease family. RNase II subfamily.

The protein localises to the cytoplasm. The catalysed reaction is Exonucleolytic cleavage in the 3'- to 5'-direction to yield nucleoside 5'-phosphates.. In terms of biological role, involved in mRNA degradation. Hydrolyzes single-stranded polyribonucleotides processively in the 3' to 5' direction. The polypeptide is Exoribonuclease 2 (Yersinia pseudotuberculosis serotype O:3 (strain YPIII)).